A 343-amino-acid polypeptide reads, in one-letter code: Glucan endo-1,3-beta-glucosidase, acidic isoform GI9 (343 aa).

The signal sequence occupies residues 1-29 (MTLCIKNGFLAAALVLVGLLICSIQMIGA). Residue Gln30 is modified to Pyrrolidone carboxylic acid. Glu124 serves as the catalytic Proton donor. Catalysis depends on Glu264, which acts as the Nucleophile.

It belongs to the glycosyl hydrolase 17 family.

The protein localises to the secreted. The protein resides in the extracellular space. The catalysed reaction is Hydrolysis of (1-&gt;3)-beta-D-glucosidic linkages in (1-&gt;3)-beta-D-glucans.. In terms of biological role, implicated in the defense of plants against pathogens. The chain is Glucan endo-1,3-beta-glucosidase, acidic isoform GI9 (PR2) from Nicotiana tabacum (Common tobacco).